The chain runs to 232 residues: Ribose-5-phosphate isomerase A (232 aa).

Substrate contacts are provided by residues 34 to 37 (TGST), 89 to 92 (DGAD), and 102 to 105 (KGGG). Glutamate 111 acts as the Proton acceptor in catalysis. Position 129 (lysine 129) interacts with substrate.

Belongs to the ribose 5-phosphate isomerase family. In terms of assembly, homodimer.

It catalyses the reaction aldehydo-D-ribose 5-phosphate = D-ribulose 5-phosphate. Its pathway is carbohydrate degradation; pentose phosphate pathway; D-ribose 5-phosphate from D-ribulose 5-phosphate (non-oxidative stage): step 1/1. Catalyzes the reversible conversion of ribose-5-phosphate to ribulose 5-phosphate. The protein is Ribose-5-phosphate isomerase A of Protochlamydia amoebophila (strain UWE25).